A 299-amino-acid polypeptide reads, in one-letter code: Serine/threonine-protein kinase 1 (299 aa).

The Protein kinase domain maps to 39–277 (IATKPMFEGG…FKGLVSHPWF (239 aa)). Residues 45–53 (FEGGRRNNV) and K66 contribute to the ATP site. D153 serves as the catalytic Proton acceptor.

This sequence belongs to the protein kinase superfamily. Ser/Thr protein kinase family.

It localises to the virion. The protein resides in the host cytoplasm. It carries out the reaction L-seryl-[protein] + ATP = O-phospho-L-seryl-[protein] + ADP + H(+). The enzyme catalyses L-threonyl-[protein] + ATP = O-phospho-L-threonyl-[protein] + ADP + H(+). Essential for viral replication. It may mediate the virus progression through DNA replication. The polypeptide is Serine/threonine-protein kinase 1 (African swine fever virus (isolate Pig/Kenya/KEN-50/1950) (ASFV)).